The primary structure comprises 168 residues: Crossover junction endodeoxyribonuclease RuvC (168 aa).

Residues Asp9, Glu69, and Asp141 contribute to the active site. Mg(2+)-binding residues include Asp9, Glu69, and Asp141.

Belongs to the RuvC family. In terms of assembly, homodimer which binds Holliday junction (HJ) DNA. The HJ becomes 2-fold symmetrical on binding to RuvC with unstacked arms; it has a different conformation from HJ DNA in complex with RuvA. In the full resolvosome a probable DNA-RuvA(4)-RuvB(12)-RuvC(2) complex forms which resolves the HJ. Requires Mg(2+) as cofactor.

The protein resides in the cytoplasm. The enzyme catalyses Endonucleolytic cleavage at a junction such as a reciprocal single-stranded crossover between two homologous DNA duplexes (Holliday junction).. In terms of biological role, the RuvA-RuvB-RuvC complex processes Holliday junction (HJ) DNA during genetic recombination and DNA repair. Endonuclease that resolves HJ intermediates. Cleaves cruciform DNA by making single-stranded nicks across the HJ at symmetrical positions within the homologous arms, yielding a 5'-phosphate and a 3'-hydroxyl group; requires a central core of homology in the junction. The consensus cleavage sequence is 5'-(A/T)TT(C/G)-3'. Cleavage occurs on the 3'-side of the TT dinucleotide at the point of strand exchange. HJ branch migration catalyzed by RuvA-RuvB allows RuvC to scan DNA until it finds its consensus sequence, where it cleaves and resolves the cruciform DNA. The polypeptide is Crossover junction endodeoxyribonuclease RuvC (Bdellovibrio bacteriovorus (strain ATCC 15356 / DSM 50701 / NCIMB 9529 / HD100)).